The primary structure comprises 304 residues: Probable 5-dehydro-4-deoxyglucarate dehydratase (304 aa).

Belongs to the DapA family.

It carries out the reaction 5-dehydro-4-deoxy-D-glucarate + H(+) = 2,5-dioxopentanoate + CO2 + H2O. It functions in the pathway carbohydrate acid metabolism; D-glucarate degradation; 2,5-dioxopentanoate from D-glucarate: step 2/2. The sequence is that of Probable 5-dehydro-4-deoxyglucarate dehydratase from Rhodococcus jostii (strain RHA1).